Here is a 106-residue protein sequence, read N- to C-terminus: Nucleoid-associated protein bll8115 (106 aa).

It belongs to the YbaB/EbfC family. As to quaternary structure, homodimer.

It is found in the cytoplasm. The protein localises to the nucleoid. Functionally, binds to DNA and alters its conformation. May be involved in regulation of gene expression, nucleoid organization and DNA protection. This is Nucleoid-associated protein bll8115 from Bradyrhizobium diazoefficiens (strain JCM 10833 / BCRC 13528 / IAM 13628 / NBRC 14792 / USDA 110).